Consider the following 331-residue polypeptide: Adenosine deaminase (331 aa).

Histidine 12 and histidine 14 together coordinate Zn(2+). Histidine 14, aspartate 16, and glycine 170 together coordinate substrate. Histidine 197 serves as a coordination point for Zn(2+). The Proton donor role is filled by glutamate 200. Residue aspartate 278 coordinates Zn(2+). Residue aspartate 279 participates in substrate binding.

It belongs to the metallo-dependent hydrolases superfamily. Adenosine and AMP deaminases family. Adenosine deaminase subfamily. Requires Zn(2+) as cofactor.

It catalyses the reaction adenosine + H2O + H(+) = inosine + NH4(+). The catalysed reaction is 2'-deoxyadenosine + H2O + H(+) = 2'-deoxyinosine + NH4(+). Functionally, catalyzes the hydrolytic deamination of adenosine and 2-deoxyadenosine. This Shewanella sp. (strain MR-4) protein is Adenosine deaminase.